Consider the following 363-residue polypeptide: UDP-N-acetylglucosamine--N-acetylmuramyl-(pentapeptide) pyrophosphoryl-undecaprenol N-acetylglucosamine transferase (363 aa).

UDP-N-acetyl-alpha-D-glucosamine-binding positions include 10 to 12 (TGG), Asn124, Ser195, Ile248, and Gln293.

Belongs to the glycosyltransferase 28 family. MurG subfamily.

The protein localises to the cell membrane. It carries out the reaction Mur2Ac(oyl-L-Ala-gamma-D-Glu-L-Lys-D-Ala-D-Ala)-di-trans,octa-cis-undecaprenyl diphosphate + UDP-N-acetyl-alpha-D-glucosamine = beta-D-GlcNAc-(1-&gt;4)-Mur2Ac(oyl-L-Ala-gamma-D-Glu-L-Lys-D-Ala-D-Ala)-di-trans,octa-cis-undecaprenyl diphosphate + UDP + H(+). Its pathway is cell wall biogenesis; peptidoglycan biosynthesis. In terms of biological role, cell wall formation. Catalyzes the transfer of a GlcNAc subunit on undecaprenyl-pyrophosphoryl-MurNAc-pentapeptide (lipid intermediate I) to form undecaprenyl-pyrophosphoryl-MurNAc-(pentapeptide)GlcNAc (lipid intermediate II). This chain is UDP-N-acetylglucosamine--N-acetylmuramyl-(pentapeptide) pyrophosphoryl-undecaprenol N-acetylglucosamine transferase, found in Lacticaseibacillus casei (strain BL23) (Lactobacillus casei).